We begin with the raw amino-acid sequence, 472 residues long: Nuclear hormone receptor family member nhr-2 (472 aa).

4 stretches are compositionally biased toward polar residues: residues 57-83 (TATNSTYMPPQSKNTVTPNATSPLSQI), 90-112 (NDTISPPLTSQNSATTPNYHNQP), 138-147 (LSSTQSSPDN), and 159-171 (VRRNTFPASSAST). 2 disordered regions span residues 57-112 (TATN…HNQP) and 138-184 (LSST…RTNT). Positions 215-297 (KDRCMVCGDN…VGMNRDNVRV (83 aa)) form a DNA-binding region, nuclear receptor. 2 consecutive NR C4-type zinc fingers follow at residues 218-238 (CMVCGDNSTGYHYGVQSCEGC) and 267-285 (CAANRGVRTRCQACRFAKC).

It belongs to the nuclear hormone receptor family.

It localises to the nucleus. Its function is as follows. Orphan nuclear receptor. The chain is Nuclear hormone receptor family member nhr-2 (nhr-2) from Caenorhabditis elegans.